The sequence spans 446 residues: Gasdermin-A (446 aa).

The interval 1 to 252 (MTMFENVTRA…FILIQASDVG (252 aa)) is triggers pyroptosis. 9–13 (RALAR) serves as a coordination point for a cardiolipin. Transmembrane regions (beta stranded) follow at residues 78–95 (NFSFKNMLDARVEGDVDV), 99–120 (VKVKGTAGLSRSSTLEVQTLSV), 164–180 (VTLERAGKAEGCFSLPF), and 184–198 (LGLQGSVNHKEAVTI).

This sequence belongs to the gasdermin family. As to quaternary structure, homooligomer; homooligomeric ring-shaped pore complex containing 18-36 subunits when inserted in the membrane. Cleavage by bacterial SpeB relieves autoinhibition by releasing the N-terminal moiety (Gasdermin-A, N-terminal) that initiates pyroptosis. In terms of processing, palmitoylated. Expressed predominantly in the gastrointestinal (GI) tract and in the skin at a lower level. In the GI tract, the expression is highly restricted to the esophagus and forestomach.

It localises to the cytoplasm. Its subcellular location is the perinuclear region. The protein localises to the cytosol. It is found in the cell membrane. The full-length protein before cleavage is inactive: intramolecular interactions between N- and C-terminal domains mediate autoinhibition in the absence of activation signal. The intrinsic pyroptosis-inducing activity is carried by the released N-terminal moiety (Gasdermin-A, N-terminal) following cleavage by bacterial effector protein SpeB. In terms of biological role, this form constitutes the precursor of the pore-forming protein and acts as a sensor of bacterial infection: upon infection, specifically cleaved by bacterial effector protein SpeB in epithelial cells, releasing the N-terminal moiety (Gasdermin-A, N-terminal) that binds to membranes and forms pores, triggering pyroptosis. Pore-forming protein that causes membrane permeabilization and pyroptosis. Released upon cleavage by bacterial effector protein SpeB, and binds to membrane inner leaflet lipids. Homooligomerizes within the membrane and forms pores of 10-15 nanometers (nm) of inner diameter, triggering pyroptosis. Pyroptosis triggers the elimination of the infected skin cell, depriving the pathogen of its protective niche, while inducing an inflammatory response. This ultimately prevents bacterial penetration of the epithelial barrier and a subsequent systemic dissemination of the pathogen. Binds to cardiolipin and other acidic phospholipids, such as phosphatidylserine, which mediate its targeting to the inner leaflet membrane. This Mus musculus (Mouse) protein is Gasdermin-A (Gsdma).